The sequence spans 483 residues: Isocitrate dehydrogenase [NADP] (483 aa).

Residue T74 participates in NADP(+) binding. D-threo-isocitrate-binding residues include S83, N85, R89, R99, and R121. Position 232 (D232) interacts with Mg(2+). NADP(+) is bound by residues 264–270 (HGSAPDI) and N277.

It belongs to the isocitrate and isopropylmalate dehydrogenases family. As to quaternary structure, homodimer. The cofactor is Mg(2+). Requires Mn(2+) as cofactor.

The enzyme catalyses D-threo-isocitrate + NADP(+) = 2-oxoglutarate + CO2 + NADPH. Its function is as follows. Catalyzes the oxidative decarboxylation of isocitrate to 2-oxoglutarate and carbon dioxide with the concomitant reduction of NADP(+). The protein is Isocitrate dehydrogenase [NADP] (icd) of Rickettsia prowazekii (strain Madrid E).